We begin with the raw amino-acid sequence, 158 residues long: NAD(P)H-quinone oxidoreductase subunit J, chloroplastic (158 aa).

Belongs to the complex I 30 kDa subunit family. As to quaternary structure, NDH is composed of at least 16 different subunits, 5 of which are encoded in the nucleus.

It is found in the plastid. It localises to the chloroplast thylakoid membrane. The enzyme catalyses a plastoquinone + NADH + (n+1) H(+)(in) = a plastoquinol + NAD(+) + n H(+)(out). The catalysed reaction is a plastoquinone + NADPH + (n+1) H(+)(in) = a plastoquinol + NADP(+) + n H(+)(out). In terms of biological role, NDH shuttles electrons from NAD(P)H:plastoquinone, via FMN and iron-sulfur (Fe-S) centers, to quinones in the photosynthetic chain and possibly in a chloroplast respiratory chain. The immediate electron acceptor for the enzyme in this species is believed to be plastoquinone. Couples the redox reaction to proton translocation, and thus conserves the redox energy in a proton gradient. The sequence is that of NAD(P)H-quinone oxidoreductase subunit J, chloroplastic from Cicer arietinum (Chickpea).